Consider the following 360-residue polypeptide: Photosystem II protein D1 (360 aa).

A run of 3 helical transmembrane segments spans residues 30–47 (YVGWFGVLMIPCLLAAAA), 119–134 (HFLIGISAYMGRQWEL), and 143–157 (WICVAYSAPVSAAFA). A chlorophyll a-binding site is contributed by His119. Pheophytin a is bound at residue Tyr127. [CaMn4O5] cluster contacts are provided by Asp171 and Glu190. Residues 198 to 219 (FHMAGVAGMFGGSLFSAMHGSL) traverse the membrane as a helical segment. Chlorophyll a is bound at residue His199. Residues His216 and 265–266 (SF) each bind a quinone. Residue His216 participates in Fe cation binding. His273 is a Fe cation binding site. A helical membrane pass occupies residues 275 to 289 (FLAVFPVVCVWLTSM). Positions 333, 334, 343, and 345 each coordinate [CaMn4O5] cluster. A propeptide spanning residues 346–360 (AAESTTVALTAPAIG) is cleaved from the precursor.

It belongs to the reaction center PufL/M/PsbA/D family. PSII is composed of 1 copy each of membrane proteins PsbA, PsbB, PsbC, PsbD, PsbE, PsbF, PsbH, PsbI, PsbJ, PsbK, PsbL, PsbM, PsbT, PsbX, PsbY, Psb30/Ycf12, peripheral proteins PsbO, CyanoQ (PsbQ), PsbU, PsbV and a large number of cofactors. It forms dimeric complexes. Requires The D1/D2 heterodimer binds P680, chlorophylls that are the primary electron donor of PSII, and subsequent electron acceptors. It shares a non-heme iron and each subunit binds pheophytin, quinone, additional chlorophylls, carotenoids and lipids. D1 provides most of the ligands for the Mn4-Ca-O5 cluster of the oxygen-evolving complex (OEC). There is also a Cl(-1) ion associated with D1 and D2, which is required for oxygen evolution. The PSII complex binds additional chlorophylls, carotenoids and specific lipids. as cofactor. In terms of processing, tyr-162 forms a radical intermediate that is referred to as redox-active TyrZ, YZ or Y-Z. Post-translationally, C-terminally processed by CtpA; processing is essential to allow assembly of the oxygen-evolving complex and thus photosynthetic growth.

The protein resides in the cellular thylakoid membrane. It carries out the reaction 2 a plastoquinone + 4 hnu + 2 H2O = 2 a plastoquinol + O2. Functionally, photosystem II (PSII) is a light-driven water:plastoquinone oxidoreductase that uses light energy to abstract electrons from H(2)O, generating O(2) and a proton gradient subsequently used for ATP formation. It consists of a core antenna complex that captures photons, and an electron transfer chain that converts photonic excitation into a charge separation. The D1/D2 (PsbA/PsbD) reaction center heterodimer binds P680, the primary electron donor of PSII as well as several subsequent electron acceptors. The polypeptide is Photosystem II protein D1 (Prochlorococcus marinus (strain MIT 9515)).